We begin with the raw amino-acid sequence, 1034 residues long: AP-3 complex subunit delta (1034 aa).

HEAT repeat units lie at residues 35 to 72, 143 to 180, 181 to 217, 219 to 255, 258 to 297, 299 to 337, 338 to 374, 376 to 414, 415 to 452, and 570 to 609; these read KYIS…LGYD, DLSR…RYPE, ALRP…KNPK, YLPL…LEPR, KKLI…GMPN, SASI…THPK, SVQA…KKNL, EIVK…LYVT, NFEW…RVPV, and NSAC…EIVQ. 4 disordered regions span residues 637–660, 669–688, 701–723, and 758–1034; these read DLDE…EHDK, QAGT…ELTP, EQSN…NADQ, and QEQQ…KEIL. S683 carries the phosphoserine modification. T687 is subject to Phosphothreonine. Residues 769–784 are compositionally biased toward basic residues; it reads GKKKHKKGKKSKKAKN. Composition is skewed to basic and acidic residues over residues 822-836 and 882-906; these read KDGK…RALD and KDKD…RKEA. A compositionally biased stretch (low complexity) spans 928–942; sequence SATSNNNNTSTVLPD. A compositionally biased stretch (basic residues) spans 986–1003; sequence KVHKKKHKKEKSQRKEKK. Over residues 1007-1016 the composition is skewed to low complexity; it reads ESASVSAIVS. Residues 1025–1034 are compositionally biased toward polar residues; that stretch reads GISTPSKEIL.

The protein belongs to the adaptor complexes large subunit family. In terms of assembly, adaptor protein complex 3 (AP-3) is a heterotetramer composed of two large chains (delta and beta3), a medium chain (mu3) and a small chain (sigma3).

It localises to the cytoplasmic vesicle. The protein localises to the clathrin-coated vesicle membrane. The protein resides in the golgi apparatus. Part of the AP-3 complex, an adapter-related complex which is not clathrin-associated. The complex is associated with the Golgi region as well as more peripheral structures. It facilitates the budding of vesicles from the Golgi membrane and may be directly involved in trafficking to lysosomes. Functionally, may be a coat protein involved in the formation of specialized structures like pigment granules. This Drosophila melanogaster (Fruit fly) protein is AP-3 complex subunit delta (g).